We begin with the raw amino-acid sequence, 517 residues long: Cytochrome P450 1A1 (517 aa).

The mitochondrial targeting signal stretch occupies residues Trp34–Pro45. Residue Ser72 is glycosylated (O-linked (GlcNAc) serine). Residue Phe229 participates in substrate binding. Cys462 provides a ligand contact to heme.

It belongs to the cytochrome P450 family. As to quaternary structure, interacts with cytosolic chaperones HSP70 and HSP90; this interaction is required for initial targeting to mitochondria. Interacts (via mitochondrial targeting signal) with TOMM40 (via N-terminus); this interaction is required for translocation across the mitochondrial outer membrane. Heme is required as a cofactor.

The protein localises to the endoplasmic reticulum membrane. Its subcellular location is the mitochondrion inner membrane. It localises to the microsome membrane. The protein resides in the cytoplasm. The enzyme catalyses an organic molecule + reduced [NADPH--hemoprotein reductase] + O2 = an alcohol + oxidized [NADPH--hemoprotein reductase] + H2O + H(+). It catalyses the reaction estrone + reduced [NADPH--hemoprotein reductase] + O2 = 2-hydroxyestrone + oxidized [NADPH--hemoprotein reductase] + H2O + H(+). It carries out the reaction estrone + reduced [NADPH--hemoprotein reductase] + O2 = 4-hydroxyestrone + oxidized [NADPH--hemoprotein reductase] + H2O + H(+). The catalysed reaction is estrone + reduced [NADPH--hemoprotein reductase] + O2 = 6alpha-hydroxyestrone + oxidized [NADPH--hemoprotein reductase] + H2O + H(+). The enzyme catalyses estrone + reduced [NADPH--hemoprotein reductase] + O2 = 15alpha-hydroxyestrone + oxidized [NADPH--hemoprotein reductase] + H2O + H(+). It catalyses the reaction estrone + reduced [NADPH--hemoprotein reductase] + O2 = 16alpha-hydroxyestrone + oxidized [NADPH--hemoprotein reductase] + H2O + H(+). It carries out the reaction 17beta-estradiol + reduced [NADPH--hemoprotein reductase] + O2 = 2-hydroxy-17beta-estradiol + oxidized [NADPH--hemoprotein reductase] + H2O + H(+). The catalysed reaction is 17beta-estradiol + reduced [NADPH--hemoprotein reductase] + O2 = 4-hydroxy-17beta-estradiol + oxidized [NADPH--hemoprotein reductase] + H2O + H(+). The enzyme catalyses 17beta-estradiol + reduced [NADPH--hemoprotein reductase] + O2 = 6alpha-hydroxy-17beta-estradiol + oxidized [NADPH--hemoprotein reductase] + H2O + H(+). It catalyses the reaction 17beta-estradiol + reduced [NADPH--hemoprotein reductase] + O2 = 7alpha-hydroxy-17beta-estradiol + oxidized [NADPH--hemoprotein reductase] + H2O + H(+). It carries out the reaction 17beta-estradiol + reduced [NADPH--hemoprotein reductase] + O2 = 15alpha-hydroxy-17beta-estradiol + oxidized [NADPH--hemoprotein reductase] + H2O + H(+). The catalysed reaction is (5Z,8Z,11Z)-eicosatrienoate + reduced [NADPH--hemoprotein reductase] + O2 = 19-hydroxy-(5Z,8Z,11Z)-eicosatrienoate + oxidized [NADPH--hemoprotein reductase] + H2O + H(+). The enzyme catalyses (5Z,8Z,11Z,14Z)-eicosatetraenoate + reduced [NADPH--hemoprotein reductase] + O2 = 16-hydroxy-(5Z,8Z,11Z,14Z)-eicosatetraenoate + oxidized [NADPH--hemoprotein reductase] + H2O + H(+). It catalyses the reaction (5Z,8Z,11Z,14Z)-eicosatetraenoate + reduced [NADPH--hemoprotein reductase] + O2 = 17-hydroxy-(5Z,8Z,11Z,14Z)-eicosatetraenoate + oxidized [NADPH--hemoprotein reductase] + H2O + H(+). It carries out the reaction (5Z,8Z,11Z,14Z)-eicosatetraenoate + reduced [NADPH--hemoprotein reductase] + O2 = 18-hydroxy-(5Z,8Z,11Z,14Z)-eicosatetraenoate + oxidized [NADPH--hemoprotein reductase] + H2O + H(+). The catalysed reaction is (5Z,8Z,11Z,14Z)-eicosatetraenoate + reduced [NADPH--hemoprotein reductase] + O2 = 19-hydroxy-(5Z,8Z,11Z,14Z)-eicosatetraenoate + oxidized [NADPH--hemoprotein reductase] + H2O + H(+). The enzyme catalyses (5Z,8Z,11Z,14Z,17Z)-eicosapentaenoate + reduced [NADPH--hemoprotein reductase] + O2 = 19-hydroxy-(5Z,8Z,11Z,14Z,17Z)-eicosapentaenoate + oxidized [NADPH--hemoprotein reductase] + H2O + H(+). It catalyses the reaction (5Z,8Z,11Z,14Z)-eicosatetraenoate + reduced [NADPH--hemoprotein reductase] + O2 = (8R,9S)-epoxy-(5Z,11Z,14Z)-eicosatrienoate + oxidized [NADPH--hemoprotein reductase] + H2O + H(+). It carries out the reaction (5Z,8Z,11Z,14Z)-eicosatetraenoate + reduced [NADPH--hemoprotein reductase] + O2 = (11R,12S)-epoxy-(5Z,8Z,14Z)-eicosatrienoate + oxidized [NADPH--hemoprotein reductase] + H2O + H(+). The catalysed reaction is (5Z,8Z,11Z,14Z)-eicosatetraenoate + reduced [NADPH--hemoprotein reductase] + O2 = (14S,15R)-epoxy-(5Z,8Z,11Z)-eicosatrienoate + oxidized [NADPH--hemoprotein reductase] + H2O + H(+). The enzyme catalyses (5Z,8Z,11Z,14Z)-eicosatetraenoate + reduced [NADPH--hemoprotein reductase] + O2 = (14R,15S)-epoxy-(5Z,8Z,11Z)-eicosatrienoate + oxidized [NADPH--hemoprotein reductase] + H2O + H(+). It catalyses the reaction (5Z,8Z,11Z,14Z,17Z)-eicosapentaenoate + reduced [NADPH--hemoprotein reductase] + O2 = (17R,18S)-epoxy-(5Z,8Z,11Z,14Z)-eicosatetraenoate + oxidized [NADPH--hemoprotein reductase] + H2O + H(+). It carries out the reaction (4Z,7Z,10Z,13Z,16Z,19Z)-docosahexaenoate + reduced [NADPH--hemoprotein reductase] + O2 = (19S,20R)-epoxy-(4Z,7Z,10Z,13Z,16Z)-docosapentaenoate + oxidized [NADPH--hemoprotein reductase] + H2O + H(+). The catalysed reaction is (4Z,7Z,10Z,13Z,16Z,19Z)-docosahexaenoate + reduced [NADPH--hemoprotein reductase] + O2 = (19R,20S)-epoxy-(4Z,7Z,10Z,13Z,16Z)-docosapentaenoate + oxidized [NADPH--hemoprotein reductase] + H2O + H(+). The enzyme catalyses all-trans-retinol + reduced [NADPH--hemoprotein reductase] + O2 = all-trans-retinal + oxidized [NADPH--hemoprotein reductase] + 2 H2O + H(+). It catalyses the reaction all-trans-retinal + reduced [NADPH--hemoprotein reductase] + O2 = all-trans-retinoate + oxidized [NADPH--hemoprotein reductase] + H2O + 2 H(+). It carries out the reaction (13S)-hydroperoxy-(9Z,11E)-octadecadienoate = 13-oxo-(9Z,11E)-octadecadienoate + H2O. The catalysed reaction is (12S)-hydroperoxy-(5Z,8Z,10E,14Z)-eicosatetraenoate = 12-oxo-(5Z,8Z,10E,14Z)-eicosatetraenoate + H2O. The enzyme catalyses (15S)-hydroperoxy-(5Z,8Z,11Z,13E)-eicosatetraenoate = 15-oxo-(5Z,8Z,11Z,13E)-eicosatetraenoate + H2O. It catalyses the reaction (5S)-hydroperoxy-(6E,8Z,11Z,14Z)-eicosatetraenoate = 5-oxo-(6E,8Z,11Z,14Z)-eicosatetraenoate + H2O. The protein operates within steroid hormone biosynthesis. It functions in the pathway lipid metabolism; fatty acid metabolism. It participates in cofactor metabolism; retinol metabolism. In terms of biological role, a cytochrome P450 monooxygenase involved in the metabolism of various endogenous substrates, including fatty acids, steroid hormones and vitamins. Mechanistically, uses molecular oxygen inserting one oxygen atom into a substrate, and reducing the second into a water molecule, with two electrons provided by NADPH via cytochrome P450 reductase (CPR; NADPH-ferrihemoprotein reductase). Catalyzes the hydroxylation of carbon-hydrogen bonds. Exhibits high catalytic activity for the formation of hydroxyestrogens from estrone (E1) and 17beta-estradiol (E2), namely 2-hydroxy E1 and E2, as well as D-ring hydroxylated E1 and E2 at the C15alpha and C16alpha positions. Displays different regioselectivities for polyunsaturated fatty acids (PUFA) hydroxylation. Catalyzes the epoxidation of double bonds of certain PUFA. Converts arachidonic acid toward epoxyeicosatrienoic acid (EET) regioisomers, 8,9-, 11,12-, and 14,15-EET, that function as lipid mediators in the vascular system. Displays an absolute stereoselectivity in the epoxidation of eicosapentaenoic acid (EPA) producing the 17(R),18(S) enantiomer. May play an important role in all-trans retinoic acid biosynthesis in extrahepatic tissues. Catalyzes two successive oxidative transformation of all-trans retinol to all-trans retinal and then to the active form all-trans retinoic acid. May also participate in eicosanoids metabolism by converting hydroperoxide species into oxo metabolites (lipoxygenase-like reaction, NADPH-independent). The chain is Cytochrome P450 1A1 (CYP1A1) from Felis catus (Cat).